Here is a 717-residue protein sequence, read N- to C-terminus: MESTSAFNLQMRPDNVAVVTIDVPGEKMNTLKAEFARDVRAIVKTLRENRDLAGVVFISAKPDNFIAGADINMIAHCQSAQEAEALASQGQQIMAEIRALPVHVVAAIHGACLGGGLELALACHSRICTDDVKTLLGLPEVQLGLLPGSGGTQRLPRLVGVSTALEMILAGKQLRPRQALKAGLVDDVVPQSILLEAAAELAKKRRPAPRRLPVRERLLAGPIGRALLFRMVTQKTHQKTHGNYPAAQRIIDVVRTGLEQGSASGYQAEARAFGELAMTPESAALRGLFFATTELKKETGSEAAPRALHSVGVLGGGLMGGGIAYVTATKARLPVRIKDISEKGINHALKYSWDLLEKKVRRRHLRASERDAQMALISASTDYRGFHQRDIVVEAVFEDLTLKQNMVAEIEAHTAPHTIFASNTSSLPIGDIAAGATRPEQVIGLHYFSPVDKMPLVEVIPHAGTSAETIATTVQLAKKQGKTPIVVADCAGFYVNRILAPYINEAMRCLMEGESIEKIDEALVKRGFPVGPIQLLDEVGIDVGTKIMPVLERAYGPRFSAPGDAVAAILNDDRKGRKNGRGFYLYPAKGRKSKKQVDPAVYGLIGVKPGGKLSGEEIAERCVMMMLNEAARCLDEGVVRSARDGDIGAVFGIGFPPFLGGPFRYMDTLGAAAMATTLTRLATRYGDRFTPCDRLLRMAQTGQTFWLAGNLQAEMTV.

Residues Met1 to Pro190 are enoyl-CoA hydratase. Residues Arg306–Val717 are 3-hydroxyacyl-CoA dehydrogenase.

This sequence in the N-terminal section; belongs to the enoyl-CoA hydratase/isomerase family. It in the central section; belongs to the 3-hydroxyacyl-CoA dehydrogenase family. Heterotetramer of two alpha chains (FadJ) and two beta chains (FadI).

The protein localises to the cytoplasm. The catalysed reaction is a (3S)-3-hydroxyacyl-CoA = a (2E)-enoyl-CoA + H2O. It carries out the reaction a 4-saturated-(3S)-3-hydroxyacyl-CoA = a (3E)-enoyl-CoA + H2O. The enzyme catalyses a (3S)-3-hydroxyacyl-CoA + NAD(+) = a 3-oxoacyl-CoA + NADH + H(+). It catalyses the reaction (3S)-3-hydroxybutanoyl-CoA = (3R)-3-hydroxybutanoyl-CoA. The protein operates within lipid metabolism; fatty acid beta-oxidation. Its function is as follows. Catalyzes the formation of a hydroxyacyl-CoA by addition of water on enoyl-CoA. Also exhibits 3-hydroxyacyl-CoA epimerase and 3-hydroxyacyl-CoA dehydrogenase activities. This is Fatty acid oxidation complex subunit alpha from Cronobacter sakazakii (strain ATCC BAA-894) (Enterobacter sakazakii).